A 221-amino-acid chain; its full sequence is Ribonuclease T (221 aa).

The region spanning 21 to 195 is the Exonuclease domain; the sequence is VVVDVETAGF…YDAEKTADLF (175 aa). Mg(2+) is bound by residues Asp24, Glu26, His182, and Asp187. Residue His182 is the Proton donor/acceptor of the active site.

It belongs to the RNase T family. Homodimer. The cofactor is Mg(2+).

In terms of biological role, trims short 3' overhangs of a variety of RNA species, leaving a one or two nucleotide 3' overhang. Responsible for the end-turnover of tRNA: specifically removes the terminal AMP residue from uncharged tRNA (tRNA-C-C-A). Also appears to be involved in tRNA biosynthesis. The sequence is that of Ribonuclease T from Marinobacter nauticus (strain ATCC 700491 / DSM 11845 / VT8) (Marinobacter aquaeolei).